We begin with the raw amino-acid sequence, 136 residues long: Nanos homolog 2 (136 aa).

Residues 27–51 (KQRQEGEVAEEPNSRPQEKSEQDLE) are disordered. Residues 28-48 (QRQEGEVAEEPNSRPQEKSEQ) are compositionally biased toward basic and acidic residues. Residues 60-114 (ICNFCKHNGESRHVYTSHQLKTPEGVVVCPILRHYVCPLCGATGDQAHTLKYCPL) form a Nanos-type zinc finger. 8 residues coordinate Zn(2+): Cys61, Cys64, His77, Cys88, Cys96, Cys99, His107, and Cys112. 2 consecutive short sequence motifs (C2HC) follow at residues 61–88 (CNFCKHNGESRHVYTSHQLKTPEGVVVC) and 96–112 (CPLCGATGDQAHTLKYC).

This sequence belongs to the nanos family. As to quaternary structure, interacts with CNOT1, CNOT3, CNOT6L, CNOT7 and CNOT9. In terms of tissue distribution, predominantly expressed in male germ cells. Expressed in self-renewing spermatogonial stem cells and developing gonads.

It localises to the cytoplasm. It is found in the P-body. The protein resides in the perinuclear region. In terms of biological role, plays a key role in the sexual differentiation of germ cells by promoting the male fate but suppressing the female fate. Represses the female fate pathways by suppressing meiosis, which in turn results in the promotion of the male fate. Maintains the suppression of meiosis by preventing STRA8 expression, which is required for premeiotic DNA replication, after CYP26B1 is decreased. Regulates the localization of the CCR4-NOT deadenylation complex to P-bodies and plays a role in recruiting the complex to trigger the degradation of mRNAs involved in meiosis. Required for the maintenance of the spermatogonial stem cell population. Not essential for the assembly of P-bodies but is required for the maintenance of their normal state. The protein is Nanos homolog 2 (Nanos2) of Mus musculus (Mouse).